Here is a 243-residue protein sequence, read N- to C-terminus: Ribosomal RNA small subunit methyltransferase J (243 aa).

Residues 112-113 (ER) and Asp-164 each bind S-adenosyl-L-methionine.

The protein belongs to the methyltransferase superfamily. RsmJ family.

It is found in the cytoplasm. It carries out the reaction guanosine(1516) in 16S rRNA + S-adenosyl-L-methionine = N(2)-methylguanosine(1516) in 16S rRNA + S-adenosyl-L-homocysteine + H(+). In terms of biological role, specifically methylates the guanosine in position 1516 of 16S rRNA. In Legionella pneumophila (strain Paris), this protein is Ribosomal RNA small subunit methyltransferase J.